Here is a 101-residue protein sequence, read N- to C-terminus: Urease subunit beta (101 aa).

The protein belongs to the urease beta subunit family. In terms of assembly, heterotrimer of UreA (gamma), UreB (beta) and UreC (alpha) subunits. Three heterotrimers associate to form the active enzyme.

It localises to the cytoplasm. The enzyme catalyses urea + 2 H2O + H(+) = hydrogencarbonate + 2 NH4(+). It participates in nitrogen metabolism; urea degradation; CO(2) and NH(3) from urea (urease route): step 1/1. This is Urease subunit beta from Paraburkholderia phymatum (strain DSM 17167 / CIP 108236 / LMG 21445 / STM815) (Burkholderia phymatum).